A 957-amino-acid polypeptide reads, in one-letter code: Glycine dehydrogenase (decarboxylating) (957 aa).

The residue at position 708 (lysine 708) is an N6-(pyridoxal phosphate)lysine.

The protein belongs to the GcvP family. The glycine cleavage system is composed of four proteins: P, T, L and H. Requires pyridoxal 5'-phosphate as cofactor.

It carries out the reaction N(6)-[(R)-lipoyl]-L-lysyl-[glycine-cleavage complex H protein] + glycine + H(+) = N(6)-[(R)-S(8)-aminomethyldihydrolipoyl]-L-lysyl-[glycine-cleavage complex H protein] + CO2. Its function is as follows. The glycine cleavage system catalyzes the degradation of glycine. The P protein binds the alpha-amino group of glycine through its pyridoxal phosphate cofactor; CO(2) is released and the remaining methylamine moiety is then transferred to the lipoamide cofactor of the H protein. In Escherichia coli O8 (strain IAI1), this protein is Glycine dehydrogenase (decarboxylating).